A 203-amino-acid polypeptide reads, in one-letter code: Selenocysteine-containing peroxiredoxin PrxU (203 aa).

In terms of domain architecture, Thioredoxin spans 2 to 160 (VSVGKKAPDF…TLRQIQAFQL (159 aa)). Selenocysteine 47 is a catalytic residue. Selenocysteine 47 is a non-standard amino acid (selenocysteine).

The protein belongs to the peroxiredoxin family. AhpC/Prx1 subfamily.

The catalysed reaction is a hydroperoxide + [thioredoxin]-dithiol = an alcohol + [thioredoxin]-disulfide + H2O. In terms of biological role, thiol-specific peroxidase that catalyzes the reduction of hydrogen peroxide and organic hydroperoxides to water and alcohols, respectively. Plays a role in cell protection against oxidative stress by detoxifying peroxides. The protein is Selenocysteine-containing peroxiredoxin PrxU of Peptoclostridium acidaminophilum (Eubacterium acidaminophilum).